A 503-amino-acid polypeptide reads, in one-letter code: Cytochrome P450 3A15 (503 aa).

Cys-442 provides a ligand contact to heme.

The protein belongs to the cytochrome P450 family. It depends on heme as a cofactor.

The protein localises to the endoplasmic reticulum membrane. Its subcellular location is the microsome membrane. It catalyses the reaction an organic molecule + reduced [NADPH--hemoprotein reductase] + O2 = an alcohol + oxidized [NADPH--hemoprotein reductase] + H2O + H(+). Its function is as follows. Cytochromes P450 are a group of heme-thiolate monooxygenases. In liver microsomes, this enzyme is involved in an NADPH-dependent electron transport pathway. It oxidizes a variety of structurally unrelated compounds, including steroids, fatty acids, and xenobiotics. The polypeptide is Cytochrome P450 3A15 (CYP3A15) (Cavia porcellus (Guinea pig)).